The sequence spans 448 residues: Trigger factor (448 aa).

The PPIase FKBP-type domain maps to 161 to 246; the sequence is GDQVTIDFEG…VHKVAGKQLP (86 aa). The tract at residues 428-448 is disordered; sequence ALQAAQQQEGAEEEAQEETSA. The span at 437–448 shows a compositional bias: acidic residues; it reads GAEEEAQEETSA.

The protein belongs to the FKBP-type PPIase family. Tig subfamily.

It is found in the cytoplasm. It carries out the reaction [protein]-peptidylproline (omega=180) = [protein]-peptidylproline (omega=0). In terms of biological role, involved in protein export. Acts as a chaperone by maintaining the newly synthesized protein in an open conformation. Functions as a peptidyl-prolyl cis-trans isomerase. This chain is Trigger factor, found in Chromohalobacter salexigens (strain ATCC BAA-138 / DSM 3043 / CIP 106854 / NCIMB 13768 / 1H11).